A 900-amino-acid chain; its full sequence is Alanine--tRNA ligase (900 aa).

Zn(2+) is bound by residues His-604, His-608, Cys-708, and His-712.

It belongs to the class-II aminoacyl-tRNA synthetase family. Zn(2+) is required as a cofactor.

It is found in the cytoplasm. The enzyme catalyses tRNA(Ala) + L-alanine + ATP = L-alanyl-tRNA(Ala) + AMP + diphosphate. In terms of biological role, catalyzes the attachment of alanine to tRNA(Ala) in a two-step reaction: alanine is first activated by ATP to form Ala-AMP and then transferred to the acceptor end of tRNA(Ala). Also edits incorrectly charged Ser-tRNA(Ala) and Gly-tRNA(Ala) via its editing domain. The sequence is that of Alanine--tRNA ligase from Saccharolobus islandicus (strain M.16.27) (Sulfolobus islandicus).